Reading from the N-terminus, the 383-residue chain is uncharacterized protein (383 aa).

This sequence belongs to the peptidase M20 family.

This is an uncharacterized protein from Staphylococcus aureus (strain N315).